We begin with the raw amino-acid sequence, 538 residues long: Putative cysteine ligase BshC (538 aa).

Positions 460–484 (KINEQIELLERMLKRNVEKKHEVEL) form a coiled coil.

Belongs to the BshC family.

Involved in bacillithiol (BSH) biosynthesis. May catalyze the last step of the pathway, the addition of cysteine to glucosamine malate (GlcN-Mal) to generate BSH. This Bacillus cereus (strain ZK / E33L) protein is Putative cysteine ligase BshC.